The chain runs to 239 residues: Type III pantothenate kinase (239 aa).

6 to 13 (DAGNTRLK) serves as a coordination point for ATP. Substrate contacts are provided by residues Tyr-87 and 94 to 97 (GADR). The active-site Proton acceptor is Asp-96. Thr-119 lines the ATP pocket. A substrate-binding site is contributed by Ser-169.

Belongs to the type III pantothenate kinase family. In terms of assembly, homodimer. It depends on NH4(+) as a cofactor. K(+) is required as a cofactor.

It is found in the cytoplasm. The catalysed reaction is (R)-pantothenate + ATP = (R)-4'-phosphopantothenate + ADP + H(+). The protein operates within cofactor biosynthesis; coenzyme A biosynthesis; CoA from (R)-pantothenate: step 1/5. Catalyzes the phosphorylation of pantothenate (Pan), the first step in CoA biosynthesis. The chain is Type III pantothenate kinase from Laribacter hongkongensis (strain HLHK9).